A 499-amino-acid chain; its full sequence is Phenylalanine--tRNA ligase alpha subunit B (499 aa).

Residues T330, 373–375 (QIE), and Y413 contribute to the L-phenylalanine site. E415 contributes to the Mg(2+) binding site. Position 439 (F439) interacts with L-phenylalanine.

This sequence belongs to the class-II aminoacyl-tRNA synthetase family. Phe-tRNA synthetase alpha subunit type 2 subfamily. Heterotetramer; dimer of two heterodimers formed by alpha and beta subunits. Mg(2+) serves as cofactor.

It localises to the cytoplasm. It carries out the reaction tRNA(Phe) + L-phenylalanine + ATP = L-phenylalanyl-tRNA(Phe) + AMP + diphosphate + H(+). The sequence is that of Phenylalanine--tRNA ligase alpha subunit B (farsa-b) from Xenopus laevis (African clawed frog).